Reading from the N-terminus, the 113-residue chain is Integration host factor subunit alpha (113 aa).

Residues 59-80 (GNFQVRDKPPRPGRNPKTGETI) form a disordered region.

It belongs to the bacterial histone-like protein family. Heterodimer of an alpha and a beta chain.

This protein is one of the two subunits of integration host factor, a specific DNA-binding protein that functions in genetic recombination as well as in transcriptional and translational control. This Bordetella bronchiseptica (strain ATCC BAA-588 / NCTC 13252 / RB50) (Alcaligenes bronchisepticus) protein is Integration host factor subunit alpha.